The chain runs to 225 residues: PKHD-type hydroxylase Smal_0990 (225 aa).

Positions 78–177 constitute a Fe2OG dioxygenase domain; sequence KYLPPRFNRY…RVASFFWVQS (100 aa). Residues His96, Asp98, and His158 each coordinate Fe cation. Residue Arg168 coordinates 2-oxoglutarate.

Fe(2+) is required as a cofactor. It depends on L-ascorbate as a cofactor.

The sequence is that of PKHD-type hydroxylase Smal_0990 from Stenotrophomonas maltophilia (strain R551-3).